The sequence spans 339 residues: Large ribosomal subunit protein uL11m (339 aa).

The protein belongs to the universal ribosomal protein uL11 family.

Its subcellular location is the mitochondrion. The protein is Large ribosomal subunit protein uL11m (RPL11) of Acanthamoeba castellanii (Amoeba).